Here is a 344-residue protein sequence, read N- to C-terminus: Protein YRO2 (344 aa).

Over 1–34 the chain is Extracellular; it reads MSDYVELLKRGGNEAIKINPPTGADFHITSRGSD. The chain crosses the membrane as a helical span at residues 35-55; the sequence is WLFTVFCVNLLFGVILVPLMF. The Cytoplasmic portion of the chain corresponds to 56-62; it reads RKPVKDR. Residues 63 to 83 traverse the membrane as a helical segment; sequence FVYYTAIAPNLFMSIAYFTMA. At 84 to 119 the chain is on the extracellular side; sequence SNLGWIPVRAKYNHVQTSTQKEHPGYRQIFYARYVG. The helical transmembrane segment at 120 to 140 threads the bilayer; the sequence is WFLAFPWPIIQMSLLGGTPLW. A topological domain (cytoplasmic) is located at residue glutamine 141. The chain crosses the membrane as a helical span at residues 142–162; the sequence is IAFNVGMTEIFTVCWLIAACV. Residues 163–172 are Extracellular-facing; sequence HSTYKWGYYT. Residues 173-193 form a helical membrane-spanning segment; it reads IGIGAAIVVCISLMTTTFNLV. The Cytoplasmic portion of the chain corresponds to 194–202; it reads KARGKDVSN. Residues 203 to 223 form a helical membrane-spanning segment; the sequence is VFITFMSVIMFLWLIAYPTCF. The Extracellular segment spans residues 224 to 238; it reads GITDGGNVLQPDSAT. The chain crosses the membrane as a helical span at residues 239–259; the sequence is IFYGIIDLLILSILPVLFMPL. Topologically, residues 260 to 344 are cytoplasmic; the sequence is ANYLGIERLG…EEEDVATDSE (85 aa). The segment at 282–344 is disordered; sequence PVAEKKMPSP…EEEDVATDSE (63 aa). A Glycyl lysine isopeptide (Lys-Gly) (interchain with G-Cter in ubiquitin) cross-link involves residue lysine 286. Serine 293 is subject to Phosphoserine. Basic and acidic residues predominate over residues 297-306; sequence SDSDSSIKEK. Positions 307 to 330 are enriched in basic residues; it reads LKLKKKHKKDKKKAKKAKKAKKAK. A compositionally biased stretch (acidic residues) spans 334 to 344; it reads EEEEDVATDSE. Threonine 341 is modified (phosphothreonine). A Phosphoserine modification is found at serine 343.

It belongs to the archaeal/bacterial/fungal opsin family.

Its subcellular location is the membrane. The polypeptide is Protein YRO2 (YRO2) (Saccharomyces cerevisiae (strain ATCC 204508 / S288c) (Baker's yeast)).